We begin with the raw amino-acid sequence, 93 residues long: Phosphocarrier protein HPr (93 aa).

The region spanning 2 to 89 (AERRVNVGWA…KLVAEGLEEL (88 aa)) is the HPr domain. Histidine 15 (pros-phosphohistidine intermediate) is an active-site residue.

The protein belongs to the HPr family.

It is found in the cytoplasm. Its function is as follows. General (non sugar-specific) component of the phosphoenolpyruvate-dependent sugar phosphotransferase system (sugar PTS). This major carbohydrate active-transport system catalyzes the phosphorylation of incoming sugar substrates concomitantly with their translocation across the cell membrane. The phosphoryl group from phosphoenolpyruvate (PEP) is transferred to the phosphoryl carrier protein HPr by enzyme I. Phospho-HPr then transfers it to the PTS EIIA domain. The protein is Phosphocarrier protein HPr (ptsH) of Streptomyces coelicolor (strain ATCC BAA-471 / A3(2) / M145).